Consider the following 69-residue polypeptide: Small, acid-soluble spore protein C1 (69 aa).

This sequence belongs to the alpha/beta-type SASP family.

In terms of biological role, SASP are bound to spore DNA. They are double-stranded DNA-binding proteins that cause DNA to change to an a-like conformation. They protect the DNA backbone from chemical and enzymatic cleavage and are thus involved in dormant spore's high resistance to UV light. This chain is Small, acid-soluble spore protein C1 (SASP-C1), found in Priestia megaterium (Bacillus megaterium).